The primary structure comprises 359 residues: Popy class I histocompatibility antigen, alpha chain E (359 aa).

A signal peptide spans 1-18 (GTLLLLLSEALALTETWA). Positions 19 to 108 (GSHSLKYFHT…LRGYYNQTEA (90 aa)) are alpha-1. Residues 19–302 (GSHSLKYFHT…EPASQTTIPI (284 aa)) lie on the Extracellular side of the membrane. An N-linked (GlcNAc...) asparagine glycan is attached at asparagine 104. An alpha-2 region spans residues 109-200 (GSHTLQWMHG…EKGKETLLHL (92 aa)). Disulfide bonds link cysteine 119–cysteine 182 and cysteine 221–cysteine 277. The tract at residues 201-292 (DPPKTHVTHH…GLPEPLTLRW (92 aa)) is alpha-3. In terms of domain architecture, Ig-like C1-type spans 203–291 (PKTHVTHHRI…EGLPEPLTLR (89 aa)). Positions 293-302 (EPASQTTIPI) are connecting peptide. Residues 303 to 326 (VGIFAGLVLLGAVVTGATVVAAVM) traverse the membrane as a helical segment. At 327-359 (WRKKSSGGKGGSYSKAEWSDSAQGSESLTACKA) the chain is on the cytoplasmic side. A disordered region spans residues 330 to 359 (KSSGGKGGSYSKAEWSDSAQGSESLTACKA). Polar residues predominate over residues 346-359 (DSAQGSESLTACKA). Serine 351 bears the Phosphoserine mark.

Belongs to the MHC class I family. As to quaternary structure, heterodimer of an alpha chain and a beta chain (beta-2-microglobulin).

It is found in the membrane. Its function is as follows. Involved in the presentation of foreign antigens to the immune system. The protein is Popy class I histocompatibility antigen, alpha chain E (Popy-E) of Pongo pygmaeus (Bornean orangutan).